The sequence spans 236 residues: Leucyl/phenylalanyl-tRNA--protein transferase (236 aa).

Belongs to the L/F-transferase family.

The protein resides in the cytoplasm. The enzyme catalyses N-terminal L-lysyl-[protein] + L-leucyl-tRNA(Leu) = N-terminal L-leucyl-L-lysyl-[protein] + tRNA(Leu) + H(+). The catalysed reaction is N-terminal L-arginyl-[protein] + L-leucyl-tRNA(Leu) = N-terminal L-leucyl-L-arginyl-[protein] + tRNA(Leu) + H(+). It catalyses the reaction L-phenylalanyl-tRNA(Phe) + an N-terminal L-alpha-aminoacyl-[protein] = an N-terminal L-phenylalanyl-L-alpha-aminoacyl-[protein] + tRNA(Phe). In terms of biological role, functions in the N-end rule pathway of protein degradation where it conjugates Leu, Phe and, less efficiently, Met from aminoacyl-tRNAs to the N-termini of proteins containing an N-terminal arginine or lysine. This Yersinia pseudotuberculosis serotype O:1b (strain IP 31758) protein is Leucyl/phenylalanyl-tRNA--protein transferase.